The following is a 348-amino-acid chain: Dihydroorotase (348 aa).

Residues His-17 and His-19 each contribute to the Zn(2+) site. Residues His-19–Arg-21 and Asn-45 each bind substrate. Lys-103, His-140, and His-178 together coordinate Zn(2+). The residue at position 103 (Lys-103) is an N6-carboxylysine. His-140 lines the substrate pocket. Substrate is bound at residue Leu-223. Zn(2+) is bound at residue Asp-251. The active site involves Asp-251. Positions 255 and 267 each coordinate substrate.

Belongs to the metallo-dependent hydrolases superfamily. DHOase family. Class II DHOase subfamily. Homodimer. Requires Zn(2+) as cofactor.

It carries out the reaction (S)-dihydroorotate + H2O = N-carbamoyl-L-aspartate + H(+). The protein operates within pyrimidine metabolism; UMP biosynthesis via de novo pathway; (S)-dihydroorotate from bicarbonate: step 3/3. Catalyzes the reversible cyclization of carbamoyl aspartate to dihydroorotate. The protein is Dihydroorotase of Salmonella typhimurium (strain LT2 / SGSC1412 / ATCC 700720).